A 303-amino-acid chain; its full sequence is Sulfate adenylyltransferase subunit 2 (303 aa).

The protein belongs to the PAPS reductase family. CysD subfamily. As to quaternary structure, heterodimer composed of CysD, the smaller subunit, and CysN.

The catalysed reaction is sulfate + ATP + H(+) = adenosine 5'-phosphosulfate + diphosphate. The protein operates within sulfur metabolism; hydrogen sulfide biosynthesis; sulfite from sulfate: step 1/3. In terms of biological role, with CysN forms the ATP sulfurylase (ATPS) that catalyzes the adenylation of sulfate producing adenosine 5'-phosphosulfate (APS) and diphosphate, the first enzymatic step in sulfur assimilation pathway. APS synthesis involves the formation of a high-energy phosphoric-sulfuric acid anhydride bond driven by GTP hydrolysis by CysN coupled to ATP hydrolysis by CysD. The sequence is that of Sulfate adenylyltransferase subunit 2 from Aliarcobacter butzleri (strain RM4018) (Arcobacter butzleri).